Here is a 257-residue protein sequence, read N- to C-terminus: Phosphonates import ATP-binding protein PhnC (257 aa).

Residues 2-246 (IEFRNVSKVY…KFAEIYGDVA (245 aa)) form the ABC transporter domain. 35 to 42 (GLSGAGKS) provides a ligand contact to ATP.

It belongs to the ABC transporter superfamily. Phosphonates importer (TC 3.A.1.9.1) family. In terms of assembly, the complex is composed of two ATP-binding proteins (PhnC), two transmembrane proteins (PhnE) and a solute-binding protein (PhnD).

The protein resides in the cell membrane. The enzyme catalyses phosphonate(out) + ATP + H2O = phosphonate(in) + ADP + phosphate + H(+). Its function is as follows. Part of the ABC transporter complex PhnCDE involved in phosphonates import. Responsible for energy coupling to the transport system. The protein is Phosphonates import ATP-binding protein PhnC of Bacillus cereus (strain ZK / E33L).